The chain runs to 514 residues: Serine--tRNA ligase, cytoplasmic (514 aa).

Methionine 1 is modified (N-acetylmethionine). The interaction with tRNA stretch occupies residues 9 to 61; the sequence is RVDKGGDPALIRETQEKRFKDPGLVDQLVKADSEWRRCRFRADNLNKLKNLCS. Serine 241 is subject to Phosphoserine. The L-serine site is built by threonine 271 and arginine 302. ATP-binding positions include 302-304 and 318-321; these read RQE and VHQF. Lysine 323 carries the post-translational modification N6-acetyllysine. Glutamate 325 serves as a coordination point for L-serine. Residue 391-394 coordinates ATP; it reads ELVS. Asparagine 427 contacts L-serine. Positions 473–514 are disordered; sequence PAPIEQEPSKKQKKQHEGSKKKAAARDVTLENRLQNMEVTDA. The segment covering 479-502 has biased composition (basic and acidic residues); the sequence is EPSKKQKKQHEGSKKKAAARDVTL. The Nuclear localization signal signature appears at 482–494; the sequence is KKQKKQHEGSKKK. Residues 504–514 show a composition bias toward polar residues; the sequence is NRLQNMEVTDA.

Belongs to the class-II aminoacyl-tRNA synthetase family. Type-1 seryl-tRNA synthetase subfamily. Homodimer. The tRNA molecule may bind across the dimer. Interacts with SIRT2. Interacts with METTL6; interaction is required for the tRNA N(3)-methylcytidine methyltransferase activity of METTL6. In terms of tissue distribution, brain.

The protein localises to the cytoplasm. The protein resides in the nucleus. It catalyses the reaction tRNA(Ser) + L-serine + ATP = L-seryl-tRNA(Ser) + AMP + diphosphate + H(+). The catalysed reaction is tRNA(Sec) + L-serine + ATP = L-seryl-tRNA(Sec) + AMP + diphosphate + H(+). It participates in aminoacyl-tRNA biosynthesis; selenocysteinyl-tRNA(Sec) biosynthesis; L-seryl-tRNA(Sec) from L-serine and tRNA(Sec): step 1/1. Catalyzes the attachment of serine to tRNA(Ser) in a two-step reaction: serine is first activated by ATP to form Ser-AMP and then transferred to the acceptor end of tRNA(Ser). Is probably also able to aminoacylate tRNA(Sec) with serine, to form the misacylated tRNA L-seryl-tRNA(Sec), which will be further converted into selenocysteinyl-tRNA(Sec). In the nucleus, binds to the VEGFA core promoter and prevents MYC binding and transcriptional activation by MYC. Recruits SIRT2 to the VEGFA promoter, promoting deacetylation of histone H4 at 'Lys-16' (H4K16). Thereby, inhibits the production of VEGFA and sprouting angiogenesis mediated by VEGFA. The sequence is that of Serine--tRNA ligase, cytoplasmic from Homo sapiens (Human).